We begin with the raw amino-acid sequence, 217 residues long: Aminopyrimidine aminohydrolase (217 aa).

Aspartate 44 lines the substrate pocket. Residue cysteine 135 is the Nucleophile of the active site. Substrate is bound by residues tyrosine 139 and tyrosine 165. Catalysis depends on glutamate 207, which acts as the Proton donor.

Belongs to the TenA family. Homotetramer.

It catalyses the reaction 4-amino-5-aminomethyl-2-methylpyrimidine + H2O = 4-amino-5-hydroxymethyl-2-methylpyrimidine + NH4(+). It participates in cofactor biosynthesis; thiamine diphosphate biosynthesis. Functionally, catalyzes an amino-pyrimidine hydrolysis reaction at the C5' of the pyrimidine moiety of thiamine compounds to give a hydroxymethylpyrimidine (HMP). Displays low activity on 4-amino-5-aminomethyl-2-methylpyrimidine as substrate, indicating that the enzyme may act on a different HMP precursor that may derive from the human stomach food assumption or processing. Is probably involved in thiamine biosynthesis. Does not display thiaminase II activity, as it is unable to hydrolyze thiamine. The protein is Aminopyrimidine aminohydrolase of Helicobacter pylori (Campylobacter pylori).